A 119-amino-acid chain; its full sequence is uncharacterized protein (119 aa).

This sequence to Synechocystis PCC 6803 slr0903.

This is an uncharacterized protein from Methanocaldococcus jannaschii (strain ATCC 43067 / DSM 2661 / JAL-1 / JCM 10045 / NBRC 100440) (Methanococcus jannaschii).